Here is a 1038-residue protein sequence, read N- to C-terminus: MPVRIYALAKELNLDSKELVDVVKKAGITGKGSALASLSDEEAQQVRGHLAGSAAKSEPKPKAAPPTKDTPTAPVAPVRDLSGATGRKPSAINVGRPSKPAEAADNPNAPAQPIRDGGRPVGKPAPIVRTPKLAPAPEAKAPEAPAADGSPKPEIRLPKTGGVGTGMASPSGRGIGMGAKTDGQSTKPESAASAPSVPGPKSDSGGRKAPESPKRESAPVASSDDDGSSNKGGGLASRIAGRMGNNSSGRVVPNTPGTPLSAVRRDSASAGGKMRSLDRSRNRPEEAAKAGDAGKSKKREPRIKVNLAQLPSAPAKPAAPTGSSGPAAQKPDIKLTRDVIEGHKQGMKAPLARLEQDEADKKQRSKKTAEGTVGLAGRGKRVIDEDEKPKKKGLAGMASARAERQRGGGGRRIVGSDGGDRHHYRRSRPRIRRKGVNTAAPRKEKVQIELPCTVRNFCEGSGLSVADVMRTLMGMGMMVNINADIDFETAELLATEHDLDIELKAAESLEQELITEIEETADDPDTLVARPPVVTFLGHVDHGKTSLLDHLVGINVVKGEAGGITQHIRAYKIDKDGRAVTFVDTPGHEAFTEMRARGANVTDIAVLVVAADDGIMPQTEEAISHAKAAEVPIVVALNKIDLEGVDANRVMTQLTEHQLTPSEWGGDVEIVRTSATQGTGMDELLDTLLTIAELNEYSANPNRSALGVCLESEQQGDRGVVAKLIVQNGTLRVGDILVCGPAHGRVRAMQDTLTGKPITEAGPSTPVSLMGLDTPPGAGDRFHVLKDISQAREIASAREGESSRQSLSGITTKVSFDSFQEMLEDGKLGESADTVKLNLIIRADARGSLEAIDKELSKFDHPEVEIRVLQRSVGGISLADATLASASDAVILGFNVIPDDKARSLAEERGVEIRRYDVIYKLTDDIRALIEGRLKPEERVVELGRALVKQVFSISRVGTIAGCYVAQGSIQRNCRIRVNRDGRTIGDYQLDTLRRIKEDVKEVPRGMECGIRLQGFNDIKQDDVLEAYKIEEVARKLD.

The tract at residues 32-442 is disordered; that stretch reads GSALASLSDE…RKGVNTAAPR (411 aa). 3 stretches are compositionally biased toward low complexity: residues 65 to 77, 100 to 113, and 131 to 147; these read PPTK…PVAP, PAEA…PAQP, and PKLA…APAA. 2 stretches are compositionally biased toward basic and acidic residues: residues 204–217 and 275–295; these read SGGR…KRES and RSLD…DAGK. Residues 311-328 are compositionally biased toward low complexity; the sequence is PSAPAKPAAPTGSSGPAA. A compositionally biased stretch (basic and acidic residues) spans 331 to 344; sequence PDIKLTRDVIEGHK. Positions 422–435 are enriched in basic residues; sequence HHYRRSRPRIRRKG. Residues 529–696 enclose the tr-type G domain; that stretch reads ARPPVVTFLG…TLLTIAELNE (168 aa). The G1 stretch occupies residues 538-545; it reads GHVDHGKT. 538 to 545 serves as a coordination point for GTP; sequence GHVDHGKT. The G2 stretch occupies residues 563-567; sequence GITQH. The G3 stretch occupies residues 584-587; it reads DTPG. GTP is bound by residues 584–588 and 638–641; these read DTPGH and NKID. The tract at residues 638-641 is G4; sequence NKID. The segment at 674 to 676 is G5; that stretch reads SAT.

Belongs to the TRAFAC class translation factor GTPase superfamily. Classic translation factor GTPase family. IF-2 subfamily.

Its subcellular location is the cytoplasm. Its function is as follows. One of the essential components for the initiation of protein synthesis. Protects formylmethionyl-tRNA from spontaneous hydrolysis and promotes its binding to the 30S ribosomal subunits. Also involved in the hydrolysis of GTP during the formation of the 70S ribosomal complex. This is Translation initiation factor IF-2 from Rhodopirellula baltica (strain DSM 10527 / NCIMB 13988 / SH1).